The chain runs to 200 residues: MMLFGKVSQQLCGIKKLPWSCDSRYFWGWLNAVFNKVDYDRIRDVGPDRAASEWLLRCGAMVRYHGQERWQTDYNHLPTGPLDKYKIQAIDATNSCIMSIGFDHMVGLQHVEKIRLCKCHFIEDDCLLRLGQLENLQKSILEMEIISCGNITDKGIIASRHLRNLKYLLLSDLPGVREKENLIQVFETALPSLELKLQLK.

Residues 1 to 25 (MMLFGKVSQQLCGIKKLPWSCDSRY) constitute a mitochondrion transit peptide. Residues 1-61 (MMLFGKVSQQ…SEWLLRCGAM (61 aa)) are N-terminal domain. Residue Gly59 participates in Mg(2+) binding. LRR repeat units lie at residues 62-87 (VRYH…KYKI), 88-116 (QAID…KIRL), 117-141 (CKCH…KSIL), and 142-173 (EMEI…LSDL). A Mg(2+)-binding site is contributed by Thr93.

This sequence belongs to the ATP synthase subunit s family. As to quaternary structure, homotetramer. Associates with ATP synthase.

The protein resides in the mitochondrion. The protein localises to the mitochondrion inner membrane. In terms of biological role, involved in regulation of mitochondrial membrane ATP synthase. Necessary for H(+) conduction of ATP synthase. Facilitates energy-driven catalysis of ATP synthesis by blocking a proton leak through an alternative proton exit pathway. The sequence is that of ATP synthase subunit s, mitochondrial (DMAC2L) from Macaca fascicularis (Crab-eating macaque).